Reading from the N-terminus, the 194-residue chain is Peptidyl-tRNA hydrolase (194 aa).

Tyr-17 is a tRNA binding site. Catalysis depends on His-22, which acts as the Proton acceptor. Phe-68, Asn-70, and Asn-116 together coordinate tRNA.

This sequence belongs to the PTH family. As to quaternary structure, monomer.

It localises to the cytoplasm. The catalysed reaction is an N-acyl-L-alpha-aminoacyl-tRNA + H2O = an N-acyl-L-amino acid + a tRNA + H(+). Hydrolyzes ribosome-free peptidyl-tRNAs (with 1 or more amino acids incorporated), which drop off the ribosome during protein synthesis, or as a result of ribosome stalling. In terms of biological role, catalyzes the release of premature peptidyl moieties from peptidyl-tRNA molecules trapped in stalled 50S ribosomal subunits, and thus maintains levels of free tRNAs and 50S ribosomes. The sequence is that of Peptidyl-tRNA hydrolase from Haemophilus influenzae (strain 86-028NP).